Here is a 186-residue protein sequence, read N- to C-terminus: MKKEYWNKPTMDLWDRLYIFEVIRGLCITGSVFFGNMWKWLTFRKGALTAYYPEELRADYSSANRGRHLLTTRADGKVQCVSCNMCATVCPAYCIEIQSAADFNDPFHPKSPDRFEIDYSRCIFCGFCVEACPEDAIRMSKDTPNFPGFDRENMWATQDLLMNWQPASDAAKSYPGSGQAHQEVHP.

4Fe-4S ferredoxin-type domains lie at 70 to 100 (LTTRADGKVQCVSCNMCATVCPAYCIEIQSA) and 113 to 142 (DRFEIDYSRCIFCGFCVEACPEDAIRMSKD). [4Fe-4S] cluster contacts are provided by Cys-80, Cys-83, Cys-86, Cys-90, Cys-122, Cys-125, Cys-128, and Cys-132.

This sequence belongs to the complex I 23 kDa subunit family. NDH-1 is composed of 14 different subunits. Subunits NuoA, H, J, K, L, M, N constitute the membrane sector of the complex. The cofactor is [4Fe-4S] cluster.

The protein localises to the cell inner membrane. It catalyses the reaction a quinone + NADH + 5 H(+)(in) = a quinol + NAD(+) + 4 H(+)(out). NDH-1 shuttles electrons from NADH, via FMN and iron-sulfur (Fe-S) centers, to quinones in the respiratory chain. The immediate electron acceptor for the enzyme in this species is believed to be ubiquinone. Couples the redox reaction to proton translocation (for every two electrons transferred, four hydrogen ions are translocated across the cytoplasmic membrane), and thus conserves the redox energy in a proton gradient. This is NADH-quinone oxidoreductase subunit I from Pelobacter propionicus (strain DSM 2379 / NBRC 103807 / OttBd1).